A 209-amino-acid chain; its full sequence is Aspartate kinase-like protein lolA1 (209 aa).

Residues 1 to 11 (MLDESPMRKGD) are compositionally biased toward basic and acidic residues. The segment at 1–27 (MLDESPMRKGDSVSNDQSNPESNASVS) is disordered. The span at 12–27 (SVSNDQSNPESNASVS) shows a compositional bias: polar residues.

The protein belongs to the aspartokinase family.

It participates in alkaloid biosynthesis. Functionally, aspartokinase-like protein; part of the gene cluster that mediates the biosynthesis of loline alkaloids, potent insecticidal agents composed of a pyrrolizidine ring system and an uncommon ether bridge linking carbons 2 and 7. Lolines are structurally differentiated by the various modifications of the L-amino group and include norloline, loline, N-methylloline, N-acetylloline, N-acetylnorloline, and N-formylloline. The first committed step is the condensation of O-acetyl-L-homoserine (derived from L-aspartic acid) and L-proline, probably catalyzed by the gamma-type pyridoxal 5'-phosphate(PLP)-dependent enzyme lolC, to give the diamino diacid, NACPP. Ensuing cyclization, decarboxylation, and acetylation steps yield 1-exo-acetamidopyrrolizidine (AcAP). LolO is required for installation of the ether bridge upon the pathway intermediate, 1-exo-acetamidopyrrolizidine (AcAP). In sequential 2-oxoglutarate- and O(2)-consuming steps, lolO removes hydrogens from C2 and C7 of AcAP to form both carbon-oxygen bonds in N-acetylnorloline (NANL), the precursor to all other lolines. The enzymes lolD, lolE, lolF and lolT have also been proposed to be involved in the ether-bridge installation. Further processing of the exocyclic moiety of NANL by fungal N-acetamidase (LolN), methyltransferase (LolM), and cytochrome P450 (LolP) enzymes, with occasional involvement of a plant acetyltransferase, generates the other known lolines. LolN transforms NANL to norlonine which is monomethylated and dimethylated to respectively lonine and N-methyllonine (NML) by lolM. LolP catalyzes hydroxylation of the methyl group in N-methylloline (NML) and further oxygenation to N-formylloline (NFL). A plant acetyltransferase is responsible for the acetylation of loline to form N-acetylloline (NAL). LolA might interact with aspartate kinase to prevent feedback inhibition of its activity by these end products and thereby promote production of L-homoserine from L-aspartate. The polypeptide is Aspartate kinase-like protein lolA1 (Epichloe uncinata (Endophyte fungus)).